A 382-amino-acid chain; its full sequence is MYIVGVMSGTSLDGIDVALVRIEGSGVESKVELIHFTTVPFCNDIKSEIQQALSIENSNVQLICSLNFKLGLCFANAVKEVCKEANFSLEQLDLIGSHGQTIYHQPKQDGNRIPSTLQIGEPAVIAYETNTTVISNFRTMDMAAGGQGAPLVPYSEVILYRDPSKNRLLQNIGGISNVTVIPSQQSDQNVIAFDTGPGNMIIDEVCQRLFQLPYDQNGEIAKQGRVVDEILTYCMSHPFLKMNPPKSTGREQFGEKFVSELLKRFEKHSKENILTTVTMFTVNSIVHHYKKFILPYYEIDEVILGGGGSYNSTLVEMLRNGLKDENCAIFIQEDIGYSSEAKEAIAFAILANETHHRNPSNVPSATGAKQSVVLGNITFPPL.

An ATP-binding site is contributed by 9–16 (GTSLDGID).

This sequence belongs to the anhydro-N-acetylmuramic acid kinase family.

The catalysed reaction is 1,6-anhydro-N-acetyl-beta-muramate + ATP + H2O = N-acetyl-D-muramate 6-phosphate + ADP + H(+). It functions in the pathway amino-sugar metabolism; 1,6-anhydro-N-acetylmuramate degradation. The protein operates within cell wall biogenesis; peptidoglycan recycling. Its function is as follows. Catalyzes the specific phosphorylation of 1,6-anhydro-N-acetylmuramic acid (anhMurNAc) with the simultaneous cleavage of the 1,6-anhydro ring, generating MurNAc-6-P. Is required for the utilization of anhMurNAc either imported from the medium or derived from its own cell wall murein, and thus plays a role in cell wall recycling. This Bacillus thuringiensis subsp. konkukian (strain 97-27) protein is Anhydro-N-acetylmuramic acid kinase.